The following is a 238-amino-acid chain: CD63 antigen (238 aa).

Over 2–11 the chain is Cytoplasmic; sequence AVEGGMKCVK. Residues 12-32 form a helical membrane-spanning segment; that stretch reads FLLYVLLLAFCACAVGLIAVG. The Extracellular segment spans residues 33 to 51; sequence VGAQLVLSQTIIQGATPGS. A helical transmembrane segment spans residues 52-72; sequence LLPVVIIAVGVFLFLVAFVGC. Over 73-81 the chain is Cytoplasmic; that stretch reads CGACKENYC. A helical membrane pass occupies residues 82 to 102; it reads LMITFAIFLSLIMLVEVAAAI. Residues 103-203 are Extracellular-facing; the sequence is AGYVFRDKVM…KIGGWLRKNV (101 aa). 3 N-linked (GlcNAc...) asparagine glycosylation sites follow: Asn130, Asn150, and Asn172. A helical membrane pass occupies residues 204–224; it reads LVVAAAALGIAFVEVLGIVFA. The Cytoplasmic segment spans residues 225 to 238; the sequence is CCLVKSIRSGYEVM. The Lysosomal targeting motif signature appears at 234–238; it reads GYEVM.

Belongs to the tetraspanin (TM4SF) family. As to quaternary structure, interacts with TIMP1 and ITGB1 and recruits TIMP1 to ITGB1. Interacts with CD9. Identified in a complex with CD9 and ITGB3. Interacts with PMEL. Interacts with KDR/VEGFR2; identified in a complex with ITGB1 and KDR/VEGFR2 and is required to recruit KDR to ITGB1 complexes. Interacts with SYT7. In terms of processing, palmitoylated at a low, basal level in unstimulated platelets. The level of palmitoylation increases when platelets are activated by thrombin (in vitro). Detected in platelets (at protein level). Dysplastic nevi, radial growth phase primary melanomas, hematopoietic cells, tissue macrophages.

It is found in the cell membrane. The protein localises to the lysosome membrane. Its subcellular location is the late endosome membrane. The protein resides in the endosome. It localises to the multivesicular body. It is found in the melanosome. The protein localises to the secreted. Its subcellular location is the extracellular exosome. The protein resides in the cell surface. Functionally, functions as a cell surface receptor for TIMP1 and plays a role in the activation of cellular signaling cascades. Plays a role in the activation of ITGB1 and integrin signaling, leading to the activation of AKT, FAK/PTK2 and MAP kinases. Promotes cell survival, reorganization of the actin cytoskeleton, cell adhesion, spreading and migration, via its role in the activation of AKT and FAK/PTK2. Plays a role in VEGFA signaling via its role in regulating the internalization of KDR/VEGFR2. Plays a role in intracellular vesicular transport processes, and is required for normal trafficking of the PMEL luminal domain that is essential for the development and maturation of melanocytes. Plays a role in the adhesion of leukocytes onto endothelial cells via its role in the regulation of SELP trafficking. May play a role in mast cell degranulation in response to Ms4a2/FceRI stimulation, but not in mast cell degranulation in response to other stimuli. The protein is CD63 antigen (CD63) of Homo sapiens (Human).